A 494-amino-acid polypeptide reads, in one-letter code: Probable cobyric acid synthase (494 aa).

The region spanning serine 249–phenylalanine 447 is the GATase cobBQ-type domain. Residue cysteine 331 is the Nucleophile of the active site. The active site involves histidine 439.

It belongs to the CobB/CobQ family. CobQ subfamily.

The protein operates within cofactor biosynthesis; adenosylcobalamin biosynthesis. In terms of biological role, catalyzes amidations at positions B, D, E, and G on adenosylcobyrinic A,C-diamide. NH(2) groups are provided by glutamine, and one molecule of ATP is hydrogenolyzed for each amidation. The chain is Probable cobyric acid synthase from Methanopyrus kandleri (strain AV19 / DSM 6324 / JCM 9639 / NBRC 100938).